A 148-amino-acid polypeptide reads, in one-letter code: MLMPKRTKFRKQQRGRMNGAACRGNEIEFGTYALQALEPVWMTSRQIEAARRAMTRYIRRGGKIYIRVFPDKPVTQRAAETRMGSGKGAPEYWVCVVKPGRILFEIDGVAEEIAREAMRLAAAKLPIKSRFIVKSETAPAEEPTNAPT.

This sequence belongs to the universal ribosomal protein uL16 family. In terms of assembly, part of the 50S ribosomal subunit.

Its function is as follows. Binds 23S rRNA and is also seen to make contacts with the A and possibly P site tRNAs. The polypeptide is Large ribosomal subunit protein uL16 (Gloeobacter violaceus (strain ATCC 29082 / PCC 7421)).